The following is a 748-amino-acid chain: Catalase-peroxidase (748 aa).

A cross-link (tryptophyl-tyrosyl-methioninium (Trp-Tyr) (with M-262)) is located at residues 91–236 (WHSAGTYRVG…LAAVQMGLIY (146 aa)). His92 functions as the Proton acceptor in the catalytic mechanism. The tract at residues 201–223 (AQPVADKAGHGKEHGRTDGGRNL) is disordered. A compositionally biased stretch (basic and acidic residues) spans 207–221 (KAGHGKEHGRTDGGR). Positions 236 to 262 (YVNPEGPDGNPDPQASAHDIRETFARM) form a cross-link, tryptophyl-tyrosyl-methioninium (Tyr-Met) (with W-91). His277 is a binding site for heme b.

Belongs to the peroxidase family. Peroxidase/catalase subfamily. In terms of assembly, homodimer or homotetramer. Heme b is required as a cofactor. Post-translationally, formation of the three residue Trp-Tyr-Met cross-link is important for the catalase, but not the peroxidase activity of the enzyme.

The enzyme catalyses H2O2 + AH2 = A + 2 H2O. The catalysed reaction is 2 H2O2 = O2 + 2 H2O. Bifunctional enzyme with both catalase and broad-spectrum peroxidase activity. The polypeptide is Catalase-peroxidase (Bordetella avium (strain 197N)).